The following is a 709-amino-acid chain: Eukaryotic translation initiation factor 3 subunit B (709 aa).

The segment at 1-98 is sufficient for interaction with HCR1 and TIF32; that stretch reads MSINEEEYLR…LFIQYKNVAD (98 aa). The sufficient for interaction with PIC8 stretch occupies residues 1–221; sequence MSINEEEYLR…GIQAWGGADF (221 aa). One can recognise an RRM domain in the interval 37 to 124; that stretch reads NYVIVDGAPI…HRLLVNRLSD (88 aa).

It belongs to the eIF-3 subunit B family. In terms of assembly, component of the eukaryotic translation initiation factor 3 (eIF-3) complex.

It is found in the cytoplasm. Functionally, RNA-binding component of the eukaryotic translation initiation factor 3 (eIF-3) complex, which is involved in protein synthesis of a specialized repertoire of mRNAs and, together with other initiation factors, stimulates binding of mRNA and methionyl-tRNAi to the 40S ribosome. The eIF-3 complex specifically targets and initiates translation of a subset of mRNAs involved in cell proliferation. This is Eukaryotic translation initiation factor 3 subunit B from Lodderomyces elongisporus (strain ATCC 11503 / CBS 2605 / JCM 1781 / NBRC 1676 / NRRL YB-4239) (Yeast).